The following is a 131-amino-acid chain: uncharacterized protein (131 aa).

Residues 17 to 39 (VILLILILLPVVFLHIMLATWGL) traverse the membrane as a helical segment.

It localises to the membrane. This is an uncharacterized protein from Archaeoglobus fulgidus (strain ATCC 49558 / DSM 4304 / JCM 9628 / NBRC 100126 / VC-16).